We begin with the raw amino-acid sequence, 335 residues long: DNA-directed RNA polymerase subunit alpha (335 aa).

An alpha N-terminal domain (alpha-NTD) region spans residues 1–231 (MVREKITVST…DLLIPFLHTK (231 aa)). An alpha C-terminal domain (alpha-CTD) region spans residues 263–335 (KKMALKSIFI…FVIDLPKNKF (73 aa)).

The protein belongs to the RNA polymerase alpha chain family. In plastids the minimal PEP RNA polymerase catalytic core is composed of four subunits: alpha, beta, beta', and beta''. When a (nuclear-encoded) sigma factor is associated with the core the holoenzyme is formed, which can initiate transcription.

It localises to the plastid. Its subcellular location is the chloroplast. The catalysed reaction is RNA(n) + a ribonucleoside 5'-triphosphate = RNA(n+1) + diphosphate. In terms of biological role, DNA-dependent RNA polymerase catalyzes the transcription of DNA into RNA using the four ribonucleoside triphosphates as substrates. This is DNA-directed RNA polymerase subunit alpha from Lactuca sativa (Garden lettuce).